The primary structure comprises 94 residues: Cystatin-A1 (94 aa).

The Secondary area of contact motif lies at 45-49; sequence QLVAG.

Belongs to the cystatin family.

It localises to the cytoplasm. Intracellular thiol proteinase inhibitor. Inhibits papain, but not cathepsin B. The sequence is that of Cystatin-A1 (cpiA) from Dictyostelium discoideum (Social amoeba).